We begin with the raw amino-acid sequence, 153 residues long: Alpha-amylase inhibitor 0.28 (153 aa).

The signal sequence occupies residues 1–30 (MWMKTVFWGLLVFMLVATTMAVEYGARSHN). 5 disulfides stabilise this stretch: cysteine 37-cysteine 84, cysteine 51-cysteine 72, cysteine 59-cysteine 112, cysteine 73-cysteine 128, and cysteine 86-cysteine 143.

This sequence belongs to the protease inhibitor I6 (cereal trypsin/alpha-amylase inhibitor) family. As to quaternary structure, monomer. The disulfide bonds are essential for the inhibitor activity. In terms of tissue distribution, endosperm.

It is found in the secreted. Its function is as follows. Alpha-amylase inhibitor. In Triticum aestivum (Wheat), this protein is Alpha-amylase inhibitor 0.28 (IMA1).